A 542-amino-acid polypeptide reads, in one-letter code: Cytochrome P450 27C1 (542 aa).

Residues 1 to 80 (MQTSAMALLA…LAAMPGPRTL (80 aa)) constitute a mitochondrion transit peptide. The tract at residues 20–75 (APERGGLLGGGAPRRPQPAGARLPAGARAEDKGAGRPGSPPGGGRAEGPRSLAAMP) is disordered. Low complexity predominate over residues 32–46 (PRRPQPAGARLPAGA). Residue Cys-488 coordinates heme.

It belongs to the cytochrome P450 family. The cofactor is heme. As to expression, widely expressed, with highest levels in the liver, kidney and pancreas. Expressed in the skin (at protein level).

The protein resides in the mitochondrion membrane. It catalyses the reaction all-trans-retinol + 2 reduced [adrenodoxin] + O2 + 2 H(+) = all-trans-3,4-didehydroretinol + 2 oxidized [adrenodoxin] + 2 H2O. The enzyme catalyses all-trans-retinol + 2 reduced [adrenodoxin] + O2 + 2 H(+) = all-trans-4-hydroxyretinol + 2 oxidized [adrenodoxin] + H2O. It carries out the reaction all-trans-retinol + 2 reduced [adrenodoxin] + O2 + 2 H(+) = all-trans-3-hydroxyretinol + 2 oxidized [adrenodoxin] + H2O. The protein operates within cofactor metabolism; retinol metabolism. Functionally, a cytochrome P450 monooxygenase that catalyzes the 3,4 desaturation of all-trans-retinol (also called vitamin A1) to all-trans-3,4-didehydroretinol (also called vitamin A2) in the skin. Desaturates with lower efficiency all-trans retinal and all-trans retinoic acid. Forms minor amounts of 3-hydroxy and 4-hydroxy all-trans-retinol derivatives. Mechanistically, uses molecular oxygen inserting one oxygen atom into a substrate and reducing the second into a water molecule. Two electrons are provided by NADPH via a two-protein mitochondrial transfer system comprising flavoprotein FDXR (adrenodoxin/ferredoxin reductase) and nonheme iron-sulfur protein FDX1 or FDX2 (adrenodoxin/ferredoxin). The chain is Cytochrome P450 27C1 from Homo sapiens (Human).